A 1241-amino-acid polypeptide reads, in one-letter code: DNA-directed RNA polymerase subunit beta (1241 aa).

Residues 1201 to 1224 (AEEEQDTDVDYITEDDFESPDPEI) form a disordered region.

This sequence belongs to the RNA polymerase beta chain family. As to quaternary structure, the RNAP catalytic core consists of 2 alpha, 1 beta, 1 beta' and 1 omega subunit. When a sigma factor is associated with the core the holoenzyme is formed, which can initiate transcription.

It catalyses the reaction RNA(n) + a ribonucleoside 5'-triphosphate = RNA(n+1) + diphosphate. Its function is as follows. DNA-dependent RNA polymerase catalyzes the transcription of DNA into RNA using the four ribonucleoside triphosphates as substrates. In Alkaliphilus oremlandii (strain OhILAs) (Clostridium oremlandii (strain OhILAs)), this protein is DNA-directed RNA polymerase subunit beta.